We begin with the raw amino-acid sequence, 295 residues long: UDP-N-acetylenolpyruvoylglucosamine reductase (295 aa).

The 166-residue stretch at 23 to 188 folds into the FAD-binding PCMH-type domain; the sequence is KVGGPADFLA…ISAKFALKPG (166 aa). Residue R167 is part of the active site. S217 acts as the Proton donor in catalysis. The active site involves E287.

The protein belongs to the MurB family. Requires FAD as cofactor.

Its subcellular location is the cytoplasm. The catalysed reaction is UDP-N-acetyl-alpha-D-muramate + NADP(+) = UDP-N-acetyl-3-O-(1-carboxyvinyl)-alpha-D-glucosamine + NADPH + H(+). The protein operates within cell wall biogenesis; peptidoglycan biosynthesis. Functionally, cell wall formation. The sequence is that of UDP-N-acetylenolpyruvoylglucosamine reductase from Streptococcus pyogenes serotype M12 (strain MGAS9429).